Here is a 450-residue protein sequence, read N- to C-terminus: Adenosylhomocysteinase (450 aa).

Residues threonine 59, aspartate 135, and glutamate 160 each coordinate substrate. 161 to 163 (TTT) is an NAD(+) binding site. Substrate contacts are provided by lysine 190 and aspartate 194. Residues asparagine 195, 224–229 (GFGDVG), glutamate 247, 303–305 (IGH), and asparagine 350 contribute to the NAD(+) site.

It belongs to the adenosylhomocysteinase family. NAD(+) serves as cofactor.

The protein localises to the cytoplasm. The enzyme catalyses S-adenosyl-L-homocysteine + H2O = L-homocysteine + adenosine. It functions in the pathway amino-acid biosynthesis; L-homocysteine biosynthesis; L-homocysteine from S-adenosyl-L-homocysteine: step 1/1. Functionally, adenosylhomocysteine is a competitive inhibitor of S-adenosyl-L-methionine-dependent methyl transferase reactions; therefore adenosylhomocysteinase may play a key role in the control of methylations via regulation of the intracellular concentration of adenosylhomocysteine. This is Adenosylhomocysteinase (SAH1) from Candida albicans (strain SC5314 / ATCC MYA-2876) (Yeast).